Reading from the N-terminus, the 219-residue chain is Octanoyltransferase (219 aa).

In terms of domain architecture, BPL/LPL catalytic spans 32 to 207; sequence ENSQDEIWIV…TLSQELGLDK (176 aa). Residues 71-78, 138-140, and 151-153 contribute to the substrate site; these read RGGQVTYH, SLG, and GLA. The active-site Acyl-thioester intermediate is Cys-169.

This sequence belongs to the LipB family.

It localises to the cytoplasm. It catalyses the reaction octanoyl-[ACP] + L-lysyl-[protein] = N(6)-octanoyl-L-lysyl-[protein] + holo-[ACP] + H(+). The protein operates within protein modification; protein lipoylation via endogenous pathway; protein N(6)-(lipoyl)lysine from octanoyl-[acyl-carrier-protein]: step 1/2. In terms of biological role, catalyzes the transfer of endogenously produced octanoic acid from octanoyl-acyl-carrier-protein onto the lipoyl domains of lipoate-dependent enzymes. Lipoyl-ACP can also act as a substrate although octanoyl-ACP is likely to be the physiological substrate. The sequence is that of Octanoyltransferase from Shewanella pealeana (strain ATCC 700345 / ANG-SQ1).